A 72-amino-acid chain; its full sequence is Potassium channel toxin epsilon-KTx 1.1 (72 aa).

The N-terminal stretch at 1-30 is a signal peptide; it reads MKLSCGFLLILLVLSAMIATFSEVEAMKPS. 4 disulfide bridges follow: C34-C42, C37-C58, C41-C51, and C46-C56. Positions 60–72 are excised as a propeptide; sequence GRSDLNDELEKYQ.

It belongs to the short scorpion toxin superfamily. Potassium channel inhibitor family. Epsilon-KTx 01 subfamily. In terms of tissue distribution, expressed by the venom gland.

The protein localises to the secreted. Functionally, potassium channel blocker. At 3 uM, this toxin blocks voltage-independently voltage-gated potassium channels rKv1.2/KCNA2 (25%), hKv1.3/KCNA3 (27%), rKv4.2/KCND2 (25%), Kv10.1/KCNH1/EAG1 (15%), Kv11/hERG (12%), and Shaker-IR (10%). On hKv1.3/KCNA3, the IC(50) is 17.1 +-3.3 uM. The chain is Potassium channel toxin epsilon-KTx 1.1 from Tityus serrulatus (Brazilian scorpion).